A 144-amino-acid chain; its full sequence is Giant hemoglobin AIII chain (144 aa).

The region spanning 2–144 (ECGPLQRLKV…DVITGGIQGN (143 aa)) is the Globin domain. Residue His95 coordinates heme b.

This sequence belongs to the globin family. Giant hemoglobin is composed of four heme-containing chains (AI to AIV), and two linker chains (AV and AVI).

This chain is Giant hemoglobin AIII chain, found in Lamellibrachia sp. (Deep-sea giant tube worm).